We begin with the raw amino-acid sequence, 108 residues long: Phosphoribosyl-ATP pyrophosphatase (108 aa).

This sequence belongs to the PRA-PH family.

Its subcellular location is the cytoplasm. The enzyme catalyses 1-(5-phospho-beta-D-ribosyl)-ATP + H2O = 1-(5-phospho-beta-D-ribosyl)-5'-AMP + diphosphate + H(+). It functions in the pathway amino-acid biosynthesis; L-histidine biosynthesis; L-histidine from 5-phospho-alpha-D-ribose 1-diphosphate: step 2/9. This is Phosphoribosyl-ATP pyrophosphatase from Pelobacter propionicus (strain DSM 2379 / NBRC 103807 / OttBd1).